The following is a 354-amino-acid chain: N-acetyl-gamma-glutamyl-phosphate reductase (354 aa).

Cys156 is a catalytic residue.

This sequence belongs to the NAGSA dehydrogenase family. Type 1 subfamily.

The protein resides in the cytoplasm. The catalysed reaction is N-acetyl-L-glutamate 5-semialdehyde + phosphate + NADP(+) = N-acetyl-L-glutamyl 5-phosphate + NADPH + H(+). It functions in the pathway amino-acid biosynthesis; L-arginine biosynthesis; N(2)-acetyl-L-ornithine from L-glutamate: step 3/4. In terms of biological role, catalyzes the NADPH-dependent reduction of N-acetyl-5-glutamyl phosphate to yield N-acetyl-L-glutamate 5-semialdehyde. The protein is N-acetyl-gamma-glutamyl-phosphate reductase of Bordetella pertussis (strain Tohama I / ATCC BAA-589 / NCTC 13251).